We begin with the raw amino-acid sequence, 409 residues long: Spermatogenesis-associated protein 2-like protein (409 aa).

Disordered regions lie at residues 233 to 257 (EDEG…TSEL), 270 to 299 (LWGA…PQPE), and 313 to 337 (RPGD…IPEP).

The protein belongs to the SPATA2 family.

In Bos taurus (Bovine), this protein is Spermatogenesis-associated protein 2-like protein (SPATA2L).